The following is a 334-amino-acid chain: Holliday junction branch migration complex subunit RuvB (334 aa).

Positions 4–184 (ADRLISAGVI…FGIVQRLEFY (181 aa)) are large ATPase domain (RuvB-L). ATP is bound by residues Ile-23, Arg-24, Gly-65, Lys-68, Thr-69, Thr-70, 131–133 (EDY), Arg-174, Tyr-184, and Arg-221. Thr-69 lines the Mg(2+) pocket. The segment at 185–255 (QVADLEHIVS…VAMKALDMLN (71 aa)) is small ATPAse domain (RuvB-S). Residues 258 to 334 (AEGFDFMDRK…YKHFGITREE (77 aa)) are head domain (RuvB-H). Residues Arg-294, Arg-313, and Arg-318 each coordinate DNA.

This sequence belongs to the RuvB family. In terms of assembly, homohexamer. Forms an RuvA(8)-RuvB(12)-Holliday junction (HJ) complex. HJ DNA is sandwiched between 2 RuvA tetramers; dsDNA enters through RuvA and exits via RuvB. An RuvB hexamer assembles on each DNA strand where it exits the tetramer. Each RuvB hexamer is contacted by two RuvA subunits (via domain III) on 2 adjacent RuvB subunits; this complex drives branch migration. In the full resolvosome a probable DNA-RuvA(4)-RuvB(12)-RuvC(2) complex forms which resolves the HJ.

The protein resides in the cytoplasm. The enzyme catalyses ATP + H2O = ADP + phosphate + H(+). Functionally, the RuvA-RuvB-RuvC complex processes Holliday junction (HJ) DNA during genetic recombination and DNA repair, while the RuvA-RuvB complex plays an important role in the rescue of blocked DNA replication forks via replication fork reversal (RFR). RuvA specifically binds to HJ cruciform DNA, conferring on it an open structure. The RuvB hexamer acts as an ATP-dependent pump, pulling dsDNA into and through the RuvAB complex. RuvB forms 2 homohexamers on either side of HJ DNA bound by 1 or 2 RuvA tetramers; 4 subunits per hexamer contact DNA at a time. Coordinated motions by a converter formed by DNA-disengaged RuvB subunits stimulates ATP hydrolysis and nucleotide exchange. Immobilization of the converter enables RuvB to convert the ATP-contained energy into a lever motion, pulling 2 nucleotides of DNA out of the RuvA tetramer per ATP hydrolyzed, thus driving DNA branch migration. The RuvB motors rotate together with the DNA substrate, which together with the progressing nucleotide cycle form the mechanistic basis for DNA recombination by continuous HJ branch migration. Branch migration allows RuvC to scan DNA until it finds its consensus sequence, where it cleaves and resolves cruciform DNA. This is Holliday junction branch migration complex subunit RuvB from Yersinia enterocolitica serotype O:8 / biotype 1B (strain NCTC 13174 / 8081).